We begin with the raw amino-acid sequence, 380 residues long: Queuine tRNA-ribosyltransferase (380 aa).

Catalysis depends on Asp95, which acts as the Proton acceptor. Residues 95–99, Asp149, Gln192, and Gly219 each bind substrate; that span reads DSGGF. The RNA binding stretch occupies residues 250–256; sequence GVGSADA. Asp269 serves as the catalytic Nucleophile. The tract at residues 274–278 is RNA binding; important for wobble base 34 recognition; it reads TRIAR. Cys307, Cys309, Cys312, and His338 together coordinate Zn(2+).

This sequence belongs to the queuine tRNA-ribosyltransferase family. In terms of assembly, homodimer. Within each dimer, one monomer is responsible for RNA recognition and catalysis, while the other monomer binds to the replacement base PreQ1. Zn(2+) is required as a cofactor.

It catalyses the reaction 7-aminomethyl-7-carbaguanine + guanosine(34) in tRNA = 7-aminomethyl-7-carbaguanosine(34) in tRNA + guanine. The protein operates within tRNA modification; tRNA-queuosine biosynthesis. Catalyzes the base-exchange of a guanine (G) residue with the queuine precursor 7-aminomethyl-7-deazaguanine (PreQ1) at position 34 (anticodon wobble position) in tRNAs with GU(N) anticodons (tRNA-Asp, -Asn, -His and -Tyr). Catalysis occurs through a double-displacement mechanism. The nucleophile active site attacks the C1' of nucleotide 34 to detach the guanine base from the RNA, forming a covalent enzyme-RNA intermediate. The proton acceptor active site deprotonates the incoming PreQ1, allowing a nucleophilic attack on the C1' of the ribose to form the product. After dissociation, two additional enzymatic reactions on the tRNA convert PreQ1 to queuine (Q), resulting in the hypermodified nucleoside queuosine (7-(((4,5-cis-dihydroxy-2-cyclopenten-1-yl)amino)methyl)-7-deazaguanosine). This is Queuine tRNA-ribosyltransferase from Lactiplantibacillus plantarum (strain ATCC BAA-793 / NCIMB 8826 / WCFS1) (Lactobacillus plantarum).